A 311-amino-acid chain; its full sequence is Solute carrier family 25 member 36-A (311 aa).

3 Solcar repeats span residues 4 to 108 (RDTL…SKEK), 116 to 203 (DSTQ…IKRK), and 224 to 308 (SDFV…VVYL). 6 consecutive transmembrane segments (helical) span residues 7-27 (LVHL…TCPL), 41-57 (FYIS…ASVA), 111-131 (NVFD…AGFT), 180-200 (MSAS…YESI), 226-246 (FVGM…IAYP), and 291-311 (QIPN…LLNG).

Belongs to the mitochondrial carrier (TC 2.A.29) family.

Its subcellular location is the mitochondrion inner membrane. The sequence is that of Solute carrier family 25 member 36-A (slc25a36a) from Danio rerio (Zebrafish).